We begin with the raw amino-acid sequence, 116 residues long: uncharacterized protein (116 aa).

This is an uncharacterized protein from Schizosaccharomyces pombe (strain 972 / ATCC 24843) (Fission yeast).